Reading from the N-terminus, the 266-residue chain is Non-structural maintenance of chromosomes element 1 homolog (266 aa).

Residues 1-102 form an interaction with NSMCE3 region; the sequence is MQGSTRRMGV…SISKMATDFA (102 aa). Residues 191-232 form an RING-type; atypical zinc finger; sequence CNICHSLLIQGQSCETCGIRMHLPCVAKYFQSNAEPRCPHCN. Positions 246 to 266 are disordered; the sequence is EKERESGVLKSNKKSLRSRQH. S251 carries the post-translational modification Phosphoserine. The span at 256–266 shows a compositional bias: basic residues; that stretch reads SNKKSLRSRQH.

Belongs to the NSE1 family. Component of the SMC5-SMC6 complex which consists at least of SMC5, SMC6, NSMCE2, NSMCE1, NSMCE4A or EID3 and NSMCE3. NSMCE1, NSMCE4A or EID3 and NSMCE3 probably form a subcomplex that bridges the head domains of the SMC5-SMC6 heterodimer. Interacts with NSMCE3. Interacts with MAGEF1. Ubiquitinated.

It is found in the nucleus. Its subcellular location is the chromosome. It localises to the telomere. The catalysed reaction is S-ubiquitinyl-[E2 ubiquitin-conjugating enzyme]-L-cysteine + [acceptor protein]-L-lysine = [E2 ubiquitin-conjugating enzyme]-L-cysteine + N(6)-ubiquitinyl-[acceptor protein]-L-lysine.. In terms of biological role, RING-type zinc finger-containing E3 ubiquitin ligase that assembles with melanoma antigen protein (MAGE) to catalyze the direct transfer of ubiquitin from E2 ubiquitin-conjugating enzyme to a specific substrate. Within MAGE-RING ubiquitin ligase complex, MAGE stimulates and specifies ubiquitin ligase activity likely through recruitment and/or stabilization of the E2 ubiquitin-conjugating enzyme at the E3:substrate complex. Involved in maintenance of genome integrity, DNA damage response and DNA repair. NSMCE3/MAGEG1 and NSMCE1 ubiquitin ligase are components of SMC5-SMC6 complex and may positively regulate homologous recombination-mediated DNA repair. MAGEF1-NSMCE1 ubiquitin ligase promotes proteasomal degradation of MMS19, a key component of the cytosolic iron-sulfur protein assembly (CIA) machinery. Down-regulation of MMS19 impairs the activity of several DNA repair and metabolism enzymes such as ERCC2/XPD, FANCJ, RTEL1 and POLD1 that require iron-sulfur clusters as cofactors. This Homo sapiens (Human) protein is Non-structural maintenance of chromosomes element 1 homolog.